A 136-amino-acid chain; its full sequence is Large ribosomal subunit protein bL21 (136 aa).

Positions 107–136 (RAAADRKTAPKRASAKAAADQTTAAQATAE) are disordered. Residues 121 to 136 (AKAAADQTTAAQATAE) are compositionally biased toward low complexity.

Belongs to the bacterial ribosomal protein bL21 family. As to quaternary structure, part of the 50S ribosomal subunit. Contacts protein L20.

In terms of biological role, this protein binds to 23S rRNA in the presence of protein L20. The chain is Large ribosomal subunit protein bL21 from Acidothermus cellulolyticus (strain ATCC 43068 / DSM 8971 / 11B).